The chain runs to 661 residues: Ubiquitin-associated and SH3 domain-containing protein A (661 aa).

Residues 15–60 (KLKSRSSPSLLEPLLAMGFPVHTALKALAATGRKTAEEALAWLHDH) form the UBA domain. The 66-residue stretch at 276–341 (VHYQTLRALF…PENYTDRASE (66 aa)) folds into the SH3 domain. The segment at 395 to 661 (RKSVLVVRHG…FNWRNWISGN (267 aa)) is phosphatase-like.

As to quaternary structure, homodimer or homooligomer. Interacts with CBL. Part of a complex containing CBL and activated EGFR. Interacts with ubiquitin and with mono-ubiquitinated proteins. Interacts with dynamin. In terms of tissue distribution, highest expression of UBASH3A in tissues belonging to the immune system, including spleen, peripheral blood leukocytes, thymus and bone marrow.

Its subcellular location is the cytoplasm. It is found in the nucleus. Interferes with CBL-mediated down-regulation and degradation of receptor-type tyrosine kinases. Promotes accumulation of activated target receptors, such as T-cell receptors, EGFR and PDGFRB, on the cell surface. Exhibits negligible protein tyrosine phosphatase activity at neutral pH. May act as a dominant-negative regulator of UBASH3B-dependent dephosphorylation. May inhibit dynamin-dependent endocytic pathways by functionally sequestering dynamin via its SH3 domain. The chain is Ubiquitin-associated and SH3 domain-containing protein A (UBASH3A) from Homo sapiens (Human).